Here is a 62-residue protein sequence, read N- to C-terminus: UPF0434 protein Tola_2233 (62 aa).

This sequence belongs to the UPF0434 family.

The protein is UPF0434 protein Tola_2233 of Tolumonas auensis (strain DSM 9187 / NBRC 110442 / TA 4).